Here is a 161-residue protein sequence, read N- to C-terminus: Cyclic pyranopterin monophosphate synthase (161 aa).

Residues 75–77 (LCH) and 113–114 (ME) contribute to the substrate site. The active site involves aspartate 128.

Belongs to the MoaC family. Homohexamer; trimer of dimers.

The catalysed reaction is (8S)-3',8-cyclo-7,8-dihydroguanosine 5'-triphosphate = cyclic pyranopterin phosphate + diphosphate. It functions in the pathway cofactor biosynthesis; molybdopterin biosynthesis. Catalyzes the conversion of (8S)-3',8-cyclo-7,8-dihydroguanosine 5'-triphosphate to cyclic pyranopterin monophosphate (cPMP). The sequence is that of Cyclic pyranopterin monophosphate synthase from Salmonella heidelberg (strain SL476).